We begin with the raw amino-acid sequence, 500 residues long: MSFDDLHKATERAVIQAVDQICDDFEVTPEKLDELTAYFIEQMEKGLAPPKEGHTLASDKGLPMIPAFVTGSPNGTERGVLLAADLGGTNFRICSVNLHGDHTFSMEQMKSKIPDDLLDDENVTSDDLFGFLARRTLAFMKKYHPDELAKGKDAKPMKLGFTFSYPVDQTSLNSGTLIRWTKGFRIADTVGKDVVQLYQEQLSAQGMPMIKVVALTNDTVGTYLSHCYTSDNTDSMTSGEISEPVIGCIFGTGTNGCYMEEINKITKLPQELRDKLIKEGKTHMIINVEWGSFDNELKHLPTTKYDVVIDQKLSTNPGFHLFEKRVSGMFLGEVLRNILVDLHSQGLLLQQYRSKEQLPRHLTTPFQLSSEVLSHIEIDDSTGLRETELSLLQSLRLPTTPTERVQIQKLVRAISRRSAYLAAVPLAAILIKTNALNKRYHGEVEIGCDGSVVEYYPGFRSMLRHALALSPLGAEGERKVHLKIAKDGSGVGAALCALVA.

Residue S2 is modified to N-acetylserine. Residue S2 is modified to Phosphoserine. The region spanning 12–498 (RAVIQAVDQI…SGVGAALCAL (487 aa)) is the Hexokinase domain. The segment at 74–216 (NGTERGVLLA…MPMIKVVALT (143 aa)) is hexokinase small subdomain. K110 contacts ATP. The tract at residues 158 to 184 (KLGFTFSYPVDQTSLNSGTLIRWTKGF) is glucose-binding. Residues 217–487 (NDTVGTYLSH…RKVHLKIAKD (271 aa)) form a hexokinase large subdomain region. Residue S470 is modified to Phosphoserine. 487–492 (DGSGVG) serves as a coordination point for ATP.

Belongs to the hexokinase family. Monomer.

The enzyme catalyses D-glucose + ATP = D-glucose 6-phosphate + ADP + H(+). The protein operates within carbohydrate metabolism; hexose metabolism. Its pathway is carbohydrate degradation; glycolysis; D-glyceraldehyde 3-phosphate and glycerone phosphate from D-glucose: step 1/4. Two isoenzymes, hexokinase-1 and hexokinase-2, can phosphorylate keto- and aldohexoses in yeast, whereas a third isoenzyme, GLK, is specific for aldohexoses. All glucose phosphorylating enzymes are involved in glucose uptake. This Saccharomyces cerevisiae (strain ATCC 204508 / S288c) (Baker's yeast) protein is Glucokinase-1 (GLK1).